Here is a 509-residue protein sequence, read N- to C-terminus: Mitogen-activated protein kinase sma-5 (509 aa).

Residues 19–72 (DPITSMSPPQENRSPKAEYLNNFFNTNPTNGKSRGSQEAPRKPLGQTNLNVQGS) are disordered. Polar residues-rich tracts occupy residues 20 to 30 (PITSMSPPQEN) and 40 to 54 (NFFN…SRGS). A Protein kinase domain is found at 105 to 411 (YEPTQNIGSG…IQDALLHPYI (307 aa)). ATP-binding positions include 111–119 (IGSGAFGIV) and K134. D231 serves as the catalytic Proton acceptor. Residues 460–482 (YSELHSGDSTGSTSDMSTNTSGE) form a disordered region. The segment covering 466-481 (GDSTGSTSDMSTNTSG) has biased composition (low complexity).

This sequence belongs to the protein kinase superfamily. CMGC Ser/Thr protein kinase family. MAP kinase subfamily. Requires Mg(2+) as cofactor. Expressed in intestine with a stronger expression in the four most anterior cells, muscles, excretory cell, pharynx and, to a lesser extent, in hypodermis.

The enzyme catalyses L-seryl-[protein] + ATP = O-phospho-L-seryl-[protein] + ADP + H(+). It catalyses the reaction L-threonyl-[protein] + ATP = O-phospho-L-threonyl-[protein] + ADP + H(+). In terms of biological role, serine/threonine-protein kinase involved in the postembryonic regulation of body size, mainly through control of cell growth. In particular, controls the volume of intestine, muscles and hypodermis. In addition, regulates growth, intestinal granule distribution, lifespan and number of offspring. This is Mitogen-activated protein kinase sma-5 from Caenorhabditis elegans.